Here is a 601-residue protein sequence, read N- to C-terminus: Deoxyhypusine synthase (601 aa).

NAD(+) contacts are provided by residues alanine 109–glycine 113 and serine 184–glycine 186. Residue glutamate 189–histidine 190 participates in spermidine binding. Residues glycine 210–glycine 242 form a disordered region. The segment covering histidine 211 to alanine 220 has biased composition (polar residues). Aspartate 398 serves as a coordination point for NAD(+). The disordered stretch occupies residues proline 411–valine 451. Residues alanine 440–valine 451 are compositionally biased toward low complexity. An NAD(+)-binding site is contributed by glycine 489. Histidine 494 is a spermidine binding site. NAD(+) is bound at residue asparagine 514–glycine 515. Spermidine is bound by residues glycine 520–aspartate 522 and glutamate 529–lysine 535. The Nucleophile role is filled by lysine 535. Glutamate 548–valine 549 provides a ligand contact to NAD(+). Positions arginine 568 to glutamate 601 are disordered.

Belongs to the deoxyhypusine synthase family. As to quaternary structure, homodimer. It depends on NAD(+) as a cofactor.

It catalyses the reaction [eIF5A protein]-L-lysine + spermidine = [eIF5A protein]-deoxyhypusine + propane-1,3-diamine. It functions in the pathway protein modification; eIF5A hypusination. N1-guanyl-1,7-diaminoheptane has a small inhibitory effect on activity. Catalyzes the NAD-dependent oxidative cleavage of spermidine and the subsequent transfer of the butylamine moiety of spermidine to the epsilon-amino group of a specific lysine residue of the eIF-5A precursor protein to form the intermediate deoxyhypusine residue. The chain is Deoxyhypusine synthase from Leishmania donovani.